The primary structure comprises 345 residues: NADPH-dependent oxidoreductase 2-alkenal reductase (345 aa).

NADP(+)-binding positions include 52-53 (PY), 163-169 (AASGAVG), Gly-188, Lys-192, Tyr-208, Asn-232, Cys-254, Tyr-260, 284-286 (FVV), Phe-330, and 334-336 (NVG). Tyr-53 serves as a coordination point for substrate. Tyr-260 contributes to the substrate binding site.

Belongs to the NADP-dependent oxidoreductase L4BD family. In terms of assembly, homodimer. As to expression, expressed in leaves.

It is found in the cytoplasm. The protein resides in the nucleus. Its subcellular location is the nucleoplasm. It catalyses the reaction an n-alkanal + NAD(+) = an alk-2-enal + NADH + H(+). The catalysed reaction is an n-alkanal + NADP(+) = an alk-2-enal + NADPH + H(+). Inhibited by N-ethylmaleimide and p-chloromercuribenzoic acid. Involved in the detoxification of reactive carbonyls. Acts on lipid peroxide-derived reactive aldehydes. Specific to a double bond activated by an adjacent carbonyl group. Can use both quinones and diamide as substrates, but not menadione, ferricyanide or phylloquinone. Can use 4-hydroxy-(2E)-nonenal (HNE), 4-hydroxy-(2E)-hexenal (HHE), (2E)-nonenal, (2E)-hexenal, (2E)-pentenal, propenal (acrolein), 3-buten-2-one and 3-penten-2-one, but not (R)-(-)-carvone, n-nonanal, n-hexanal, (3Z)-hexanal, cyclohex-2-en-1-one or 12-oxo phytodienoic acid (OPDA) as electron acceptors. Catalyzes the reduction of the alpha,beta-unsaturated bond of 2-alkenals, of lipid peroxide-derived oxenes 9-oxo-10(E),12(Z)-octadecadienoic acid (9-KODE) and 13-oxo-9(Z),11(E)-octadecadienoic acid (13-KODE), as well as 4-oxo-(2E)-nonenal and 4-hydroxynonenal. Can use 12-oxo-10(E) dodecanoate (traumatin), trans-1,3 diphenyl-2-propenone, trans-1,4-diphenyl-2-butene-1,4-dione, 9-oxo-12,13-epoxy-(10E)-octadecenoic acid (trans-EKODE-1b) and 9,13-dihydroxy-10-oxo-11-octadecenoic acid as substrates. Catalyzes the reduction of the 7-8 double bond of phenylpropanal substrates, such as p-coumaryl aldehyde and coniferyl aldehyde (in vitro). Has activity towards toxic substrates, such as 4-hydroxy-(2E)-nonenal (in vitro). May play a distinct role in plant antioxidant defense and is possibly involved in NAD(P)/NAD(P)H homeostasis. This is NADPH-dependent oxidoreductase 2-alkenal reductase from Arabidopsis thaliana (Mouse-ear cress).